The chain runs to 232 residues: A-type ATP synthase subunit D (232 aa).

Residues 200–232 (KKIKNKKEAEEEDEDEDESEMTDETVVQTPADD) are disordered. The segment covering 209–222 (EEEDEDEDESEMTD) has biased composition (acidic residues).

It belongs to the V-ATPase D subunit family. In terms of assembly, has multiple subunits with at least A(3), B(3), C, D, E, F, H, I and proteolipid K(x).

It is found in the cell membrane. In terms of biological role, component of the A-type ATP synthase that produces ATP from ADP in the presence of a proton gradient across the membrane. This is A-type ATP synthase subunit D from Haloquadratum walsbyi (strain DSM 16790 / HBSQ001).